Here is a 56-residue protein sequence, read N- to C-terminus: Light-harvesting protein B-880 beta chain (56 aa).

The Cytoplasmic segment spans residues Ala-1–Gly-22. Residues His-21 and His-39 each contribute to the a bacteriochlorophyll site. A helical transmembrane segment spans residues Val-23–Trp-45. Over Arg-46–Ala-56 the chain is Periplasmic.

The protein belongs to the antenna complex beta subunit family. The core complex is formed by different alpha and beta chains, binding bacteriochlorophyll molecules, and arranged most probably in tetrameric structures disposed around the reaction center. The non-pigmented gamma chains may constitute additional components.

It is found in the cell inner membrane. Antenna complexes are light-harvesting systems, which transfer the excitation energy to the reaction centers. The chain is Light-harvesting protein B-880 beta chain from Afifella marina (Rhodobium marinum).